The primary structure comprises 156 residues: 6,7-dimethyl-8-ribityllumazine synthase (156 aa).

Residues phenylalanine 23, 57-59 (AYE), and 81-83 (AII) each bind 5-amino-6-(D-ribitylamino)uracil. Residue 86-87 (GT) participates in (2S)-2-hydroxy-3-oxobutyl phosphate binding. The active-site Proton donor is the histidine 89. Phenylalanine 114 contributes to the 5-amino-6-(D-ribitylamino)uracil binding site. Arginine 128 contributes to the (2S)-2-hydroxy-3-oxobutyl phosphate binding site.

Belongs to the DMRL synthase family.

It carries out the reaction (2S)-2-hydroxy-3-oxobutyl phosphate + 5-amino-6-(D-ribitylamino)uracil = 6,7-dimethyl-8-(1-D-ribityl)lumazine + phosphate + 2 H2O + H(+). It functions in the pathway cofactor biosynthesis; riboflavin biosynthesis; riboflavin from 2-hydroxy-3-oxobutyl phosphate and 5-amino-6-(D-ribitylamino)uracil: step 1/2. Catalyzes the formation of 6,7-dimethyl-8-ribityllumazine by condensation of 5-amino-6-(D-ribitylamino)uracil with 3,4-dihydroxy-2-butanone 4-phosphate. This is the penultimate step in the biosynthesis of riboflavin. The polypeptide is 6,7-dimethyl-8-ribityllumazine synthase (Helicobacter acinonychis (strain Sheeba)).